A 349-amino-acid chain; its full sequence is Protein RecA (349 aa).

Ser71 to Thr75 provides a ligand contact to phosphate. ATP is bound by residues Ser71 to Thr76 and Asp102 to Tyr105. Gln196 contributes to the phosphate binding site.

It belongs to the RecA family. As to quaternary structure, polymerizes non-specifically on ssDNA to form filaments. Interacts with and activates LexA leading to autocatalytic cleavage of LexA, which derepresses the SOS regulon and activates DNA repair.

Its subcellular location is the cytoplasm. In terms of biological role, required for homologous recombination (HR) and the bypass of mutagenic DNA lesions (double strand breaks, DSB) by the SOS response. Can catalyze the hydrolysis of ATP in the presence of single-stranded DNA, the ATP-dependent uptake of single-stranded DNA by duplex DNA, and the ATP-dependent hybridization of homologous single-stranded DNAs. Numerous X-ray crystals have been resolved under different conditions which indicate the flexibility of the protein, essential to its function. Gln-196 contributes to this plasticity by acting as a switch residue, which transmits the effect of nucleotide binding to the DNA-binding region. The chain is Protein RecA from Mycolicibacterium smegmatis (strain ATCC 700084 / mc(2)155) (Mycobacterium smegmatis).